Consider the following 132-residue polypeptide: Fatty acid-binding protein, intestinal (132 aa).

An N-acetylalanine modification is found at Ala-2. Hexadecanoate contacts are provided by Trp-83 and Arg-107. Trp-83 and Arg-107 together coordinate tetradecanoate.

It belongs to the calycin superfamily. Fatty-acid binding protein (FABP) family. In terms of tissue distribution, expressed in the small intestine. Highest expression levels in the proximal ileum.

The protein resides in the cytoplasm. FABPs are thought to play a role in the intracellular transport of long-chain fatty acids and their acyl-CoA esters. FABP2 is probably involved in triglyceride-rich lipoprotein synthesis. Binds saturated long-chain fatty acids with a high affinity, but binds with a lower affinity to unsaturated long-chain fatty acids. FABP2 may also help maintain energy homeostasis by functioning as a lipid sensor. This is Fatty acid-binding protein, intestinal (Fabp2) from Mus musculus (Mouse).